We begin with the raw amino-acid sequence, 324 residues long: UDP-N-acetylenolpyruvoylglucosamine reductase (324 aa).

One can recognise an FAD-binding PCMH-type domain in the interval 36–203 (FRAGGLAELM…THAIFEGFPE (168 aa)). Arg-183 is an active-site residue. Ser-232 serves as the catalytic Proton donor. Glu-302 is a catalytic residue.

Belongs to the MurB family. The cofactor is FAD.

The protein localises to the cytoplasm. The enzyme catalyses UDP-N-acetyl-alpha-D-muramate + NADP(+) = UDP-N-acetyl-3-O-(1-carboxyvinyl)-alpha-D-glucosamine + NADPH + H(+). The protein operates within cell wall biogenesis; peptidoglycan biosynthesis. Its function is as follows. Cell wall formation. In Sinorhizobium fredii (strain NBRC 101917 / NGR234), this protein is UDP-N-acetylenolpyruvoylglucosamine reductase.